A 422-amino-acid polypeptide reads, in one-letter code: Aspartate--tRNA(Asp/Asn) ligase (422 aa).

Residue glutamate 158 coordinates L-aspartate. The tract at residues 180-183 is aspartate; that stretch reads QLYK. Arginine 201 contributes to the L-aspartate binding site. Residues 201-203, 209-211, and glutamate 345 contribute to the ATP site; these read RME and RHL. Serine 348 and arginine 352 together coordinate L-aspartate. 393–396 provides a ligand contact to ATP; it reads GAER.

The protein belongs to the class-II aminoacyl-tRNA synthetase family. Type 2 subfamily. Homodimer. Makes part of a ribonucleoprotein particle (RNP) called transamidosome that allows channelling of the aa-tRNA from non-discriminating aspartyl-tRNA synthetase active site to the GatCAB amidotransferase site. The transamidosome complex is formed by two GatCABs, one dimeric ND-AspRSs and two tRNAs(Asn) molecules.

It localises to the cytoplasm. It catalyses the reaction tRNA(Asx) + L-aspartate + ATP = L-aspartyl-tRNA(Asx) + AMP + diphosphate. Functionally, aspartyl-tRNA synthetase with relaxed tRNA specificity since it is able to aspartylate not only its cognate tRNA(Asp) but also tRNA(Asn) with similar efficiencies. Reaction proceeds in two steps: L-aspartate is first activated by ATP to form Asp-AMP and then transferred to the acceptor end of tRNA(Asp/Asn). The sequence is that of Aspartate--tRNA(Asp/Asn) ligase (aspS2) from Thermus thermophilus (strain ATCC 27634 / DSM 579 / HB8).